A 484-amino-acid polypeptide reads, in one-letter code: MIQVLLVTICLAALPYQGSSIILESGNVNDYEVVYPRKVTALPKGAGQPKYEDAMQYEFKVNGEPVVLHLEKNKGLFSKDYSETHYSSDGRKITTNPPVEDHCYYHGRIENDADSTGSISACNGLKGHFKLQGEMYLIEPLKLSDSEAHAIYKYENVEKEDEAPKMCGVTETNWESYEPIKKASQSNLTPEQQRFNPFKYVELVIVADHRMFTKYNGDLEKIRIKIYEIVNILNEMFRYLYIRIALVDLEIWSNRDLINVTSVAGDTLDSFGNWRETDLLKRKSHDNAQLLTGIDFNGTTIGIAYIASMCNPYLSVGIVQDHSEINFLIAVTMAHEMGHNLGMRHDTDYCTCGGYSCIMCAVLSDQPSKFFSNCSYIQYGKFIMNQNSQCILNEPLGTDIVSPPVCGNEILEVGEECDCGCPTNCQDPCCNAATCKQYSWVQCESGECCEQCRFRAAGTVCRRATDNDMDNRCTGQSADCPSNG.

Positions 1-20 (MIQVLLVTICLAALPYQGSS) are cleaved as a signal peptide. The propeptide occupies 21-190 (IILESGNVND…KKASQSNLTP (170 aa)). Glu-191 carries the pyrrolidone carboxylic acid (Glu) modification. In terms of domain architecture, Peptidase M12B spans 199–395 (KYVELVIVAD…QNSQCILNEP (197 aa)). Glu-202 provides a ligand contact to Ca(2+). A glycan (N-linked (GlcNAc...) asparagine) is linked at Asn-259. Ca(2+) is bound at residue Asp-286. N-linked (GlcNAc...) asparagine glycosylation is present at Asn-297. 3 disulfides stabilise this stretch: Cys-310-Cys-390, Cys-350-Cys-374, and Cys-352-Cys-357. His-335 is a Zn(2+) binding site. Residue Glu-336 is part of the active site. Residues His-339 and His-345 each coordinate Zn(2+). N-linked (GlcNAc...) asparagine glycosylation occurs at Asn-373. 7 residues coordinate Ca(2+): Cys-390, Asn-393, Val-405, Asn-408, Glu-412, Glu-415, and Asp-418. The Disintegrin domain maps to 403–484 (PPVCGNEILE…GQSADCPSNG (82 aa)). Disulfide bonds link Cys-406/Cys-425, Cys-417/Cys-435, Cys-419/Cys-430, Cys-429/Cys-452, Cys-443/Cys-449, Cys-448/Cys-473, and Cys-461/Cys-480. A TDN-tripeptide motif is present at residues 465–467 (TDN).

Belongs to the venom metalloproteinase (M12B) family. P-II subfamily. P-IIc sub-subfamily. As to quaternary structure, homodimer. It depends on Zn(2+) as a cofactor. In terms of processing, the N-terminus is blocked. As to expression, expressed by the venom gland.

The protein localises to the secreted. Platelet aggregation in inhibited by the metalloproteinase inhibitors EDTA and Batimastat. The hemorrhagic activity is not inhibited by the plasma proteinase inhibitor alpha2-macroglobulin, although the SVMP is able to cleave this plasma inhibitor, generating a 90 kDa product. In terms of biological role, snake venom zinc metalloprotease-disintegrin that hydrolyzes azocasein, gelatin and fibrinogen (Aalpha and Bbeta chains and partially gamma-chain), and exerts a potent local and systemic hemorrhagic activity in mice. It inhibits ADP- and collagen-induced human platelet aggregation (IC(50) = 0.3 uM and 0.7 uM for ADP and collagen, respectively). This inhibition is dependent of protease activity, and probably occurs through the degradation of an unknown platelet receptor. The protein is Zinc metalloproteinase-disintegrin BlatH1 of Bothriechis lateralis (Side-striped palm pitviper).